Consider the following 285-residue polypeptide: Urease accessory protein UreD (285 aa).

The protein belongs to the UreD family. UreD, UreF and UreG form a complex that acts as a GTP-hydrolysis-dependent molecular chaperone, activating the urease apoprotein by helping to assemble the nickel containing metallocenter of UreC. The UreE protein probably delivers the nickel.

The protein resides in the cytoplasm. Functionally, required for maturation of urease via the functional incorporation of the urease nickel metallocenter. The protein is Urease accessory protein UreD of Picosynechococcus sp. (strain ATCC 27264 / PCC 7002 / PR-6) (Agmenellum quadruplicatum).